We begin with the raw amino-acid sequence, 729 residues long: Phosphoribosylformylglycinamidine synthase subunit PurL (729 aa).

Histidine 54 is an active-site residue. ATP is bound by residues tyrosine 57 and lysine 96. Glutamate 98 is a binding site for Mg(2+). Substrate is bound by residues 99-102 and arginine 121; that span reads SHNH. Histidine 100 (proton acceptor) is an active-site residue. Mg(2+) is bound at residue aspartate 122. Substrate is bound at residue glutamine 245. Position 273 (aspartate 273) interacts with Mg(2+). 317 to 319 provides a ligand contact to substrate; sequence ETQ. ATP-binding residues include aspartate 495 and glycine 532. Asparagine 533 is a binding site for Mg(2+). Residue serine 535 participates in substrate binding.

The protein belongs to the FGAMS family. As to quaternary structure, monomer. Part of the FGAM synthase complex composed of 1 PurL, 1 PurQ and 2 PurS subunits.

It is found in the cytoplasm. It catalyses the reaction N(2)-formyl-N(1)-(5-phospho-beta-D-ribosyl)glycinamide + L-glutamine + ATP + H2O = 2-formamido-N(1)-(5-O-phospho-beta-D-ribosyl)acetamidine + L-glutamate + ADP + phosphate + H(+). The protein operates within purine metabolism; IMP biosynthesis via de novo pathway; 5-amino-1-(5-phospho-D-ribosyl)imidazole from N(2)-formyl-N(1)-(5-phospho-D-ribosyl)glycinamide: step 1/2. Functionally, part of the phosphoribosylformylglycinamidine synthase complex involved in the purines biosynthetic pathway. Catalyzes the ATP-dependent conversion of formylglycinamide ribonucleotide (FGAR) and glutamine to yield formylglycinamidine ribonucleotide (FGAM) and glutamate. The FGAM synthase complex is composed of three subunits. PurQ produces an ammonia molecule by converting glutamine to glutamate. PurL transfers the ammonia molecule to FGAR to form FGAM in an ATP-dependent manner. PurS interacts with PurQ and PurL and is thought to assist in the transfer of the ammonia molecule from PurQ to PurL. The protein is Phosphoribosylformylglycinamidine synthase subunit PurL of Staphylococcus aureus (strain USA300).